The primary structure comprises 146 residues: Hemoglobin subunit beta (146 aa).

Residue Val1 is modified to N-acetylvaline. One can recognise a Globin domain in the interval 2-146; it reads HLTAEEKAAV…VATALAHKYH (145 aa). Thr12 is modified (phosphothreonine). Ser44 carries the post-translational modification Phosphoserine. At Lys59 the chain carries N6-acetyllysine. His63 is a heme b binding site. N6-acetyllysine is present on Lys82. His92 lines the heme b pocket. Residue Cys93 is modified to S-nitrosocysteine. Lys144 is modified (N6-acetyllysine).

Belongs to the globin family. Heterotetramer of two alpha chains and two beta chains. As to expression, red blood cells.

Its function is as follows. Involved in oxygen transport from the lung to the various peripheral tissues. This chain is Hemoglobin subunit beta (HBB), found in Mustela lutreola (European mink).